We begin with the raw amino-acid sequence, 459 residues long: Putrescine aminotransferase (459 aa).

Pyridoxal 5'-phosphate contacts are provided by residues 150–151 (GT) and Gln274. Position 300 is an N6-(pyridoxal phosphate)lysine (Lys300). Thr332 contributes to the pyridoxal 5'-phosphate binding site.

It belongs to the class-III pyridoxal-phosphate-dependent aminotransferase family. Putrescine aminotransferase subfamily. Requires pyridoxal 5'-phosphate as cofactor.

The enzyme catalyses an alkane-alpha,omega-diamine + 2-oxoglutarate = an omega-aminoaldehyde + L-glutamate. It carries out the reaction putrescine + 2-oxoglutarate = 1-pyrroline + L-glutamate + H2O. The catalysed reaction is cadaverine + 2-oxoglutarate = 5-aminopentanal + L-glutamate. It participates in amine and polyamine degradation; putrescine degradation; 4-aminobutanal from putrescine (transaminase route): step 1/1. Catalyzes the aminotransferase reaction from putrescine to 2-oxoglutarate, leading to glutamate and 4-aminobutanal, which spontaneously cyclizes to form 1-pyrroline. This is the first step in one of two pathways for putrescine degradation, where putrescine is converted into 4-aminobutanoate (gamma-aminobutyrate or GABA) via 4-aminobutanal. Also functions as a cadaverine transaminase in a a L-lysine degradation pathway to succinate that proceeds via cadaverine, glutarate and L-2-hydroxyglutarate. This Escherichia fergusonii (strain ATCC 35469 / DSM 13698 / CCUG 18766 / IAM 14443 / JCM 21226 / LMG 7866 / NBRC 102419 / NCTC 12128 / CDC 0568-73) protein is Putrescine aminotransferase.